The primary structure comprises 367 residues: Glutamate 5-kinase (367 aa).

An ATP-binding site is contributed by lysine 9. Positions 49, 136, and 148 each coordinate substrate. Residues 168–169 (TD) and 210–216 (TGGMKSK) each bind ATP. A PUA domain is found at 276 to 350 (SGQIEIDAGA…GMQSQHIQAR (75 aa)).

This sequence belongs to the glutamate 5-kinase family.

It is found in the cytoplasm. It carries out the reaction L-glutamate + ATP = L-glutamyl 5-phosphate + ADP. Its pathway is amino-acid biosynthesis; L-proline biosynthesis; L-glutamate 5-semialdehyde from L-glutamate: step 1/2. In terms of biological role, catalyzes the transfer of a phosphate group to glutamate to form L-glutamate 5-phosphate. This is Glutamate 5-kinase from Bacillus cereus (strain ATCC 10987 / NRS 248).